Here is a 344-residue protein sequence, read N- to C-terminus: Anthranilate phosphoribosyltransferase (344 aa).

Residues Gly-83, 86 to 87, Thr-91, 93 to 96, 111 to 119, and Ser-123 each bind 5-phospho-alpha-D-ribose 1-diphosphate; these read GD, NIST, and KHGGRSVSS. Anthranilate is bound at residue Gly-83. Position 95 (Ser-95) interacts with Mg(2+). Position 169 (Arg-169) interacts with anthranilate. Mg(2+)-binding residues include Asp-228 and Glu-229.

Belongs to the anthranilate phosphoribosyltransferase family. Homodimer. Requires Mg(2+) as cofactor.

It carries out the reaction N-(5-phospho-beta-D-ribosyl)anthranilate + diphosphate = 5-phospho-alpha-D-ribose 1-diphosphate + anthranilate. Its pathway is amino-acid biosynthesis; L-tryptophan biosynthesis; L-tryptophan from chorismate: step 2/5. Its function is as follows. Catalyzes the transfer of the phosphoribosyl group of 5-phosphorylribose-1-pyrophosphate (PRPP) to anthranilate to yield N-(5'-phosphoribosyl)-anthranilate (PRA). The protein is Anthranilate phosphoribosyltransferase of Methylibium petroleiphilum (strain ATCC BAA-1232 / LMG 22953 / PM1).